Consider the following 567-residue polypeptide: Oxygen-dependent choline dehydrogenase (567 aa).

6–35 serves as a coordination point for FAD; the sequence is DYIIVGAGSAGNTLATRLTEDEGVTVLLLE. Residue His475 is the Proton acceptor of the active site.

Belongs to the GMC oxidoreductase family. Requires FAD as cofactor.

The enzyme catalyses choline + A = betaine aldehyde + AH2. It carries out the reaction betaine aldehyde + NAD(+) + H2O = glycine betaine + NADH + 2 H(+). It functions in the pathway amine and polyamine biosynthesis; betaine biosynthesis via choline pathway; betaine aldehyde from choline (cytochrome c reductase route): step 1/1. Its function is as follows. Involved in the biosynthesis of the osmoprotectant glycine betaine. Catalyzes the oxidation of choline to betaine aldehyde and betaine aldehyde to glycine betaine at the same rate. The chain is Oxygen-dependent choline dehydrogenase from Pseudomonas fluorescens (strain Pf0-1).